We begin with the raw amino-acid sequence, 378 residues long: D-alanine--D-alanine ligase (378 aa).

Residues Lys149–Glu374 form the ATP-grasp domain. Glu189–Glu247 is an ATP binding site. Mg(2+) is bound by residues Asp328, Glu341, and Asn343.

The protein belongs to the D-alanine--D-alanine ligase family. It depends on Mg(2+) as a cofactor. Mn(2+) is required as a cofactor.

The protein localises to the cytoplasm. The catalysed reaction is 2 D-alanine + ATP = D-alanyl-D-alanine + ADP + phosphate + H(+). The protein operates within cell wall biogenesis; peptidoglycan biosynthesis. Its function is as follows. Cell wall formation. This Bifidobacterium adolescentis (strain ATCC 15703 / DSM 20083 / NCTC 11814 / E194a) protein is D-alanine--D-alanine ligase.